Reading from the N-terminus, the 150-residue chain is UPF0756 membrane protein ABAYE1440 (150 aa).

Transmembrane regions (helical) follow at residues 1 to 21, 45 to 65, 83 to 103, and 115 to 135; these read MLAQ…CGLL, FFPY…TIGV, FISF…WLGG, and VVAG…GVPV.

The protein belongs to the UPF0756 family.

It localises to the cell membrane. The chain is UPF0756 membrane protein ABAYE1440 from Acinetobacter baumannii (strain AYE).